The following is a 267-amino-acid chain: Small ribosomal subunit protein uS2 (267 aa).

The span at 233–250 shows a compositional bias: basic and acidic residues; sequence RAESDKAETDKVEVEGKG. The segment at 233 to 267 is disordered; sequence RAESDKAETDKVEVEGKGEAPAAEAAEVVESADKA. The segment covering 251-261 has biased composition (low complexity); that stretch reads EAPAAEAAEVV.

It belongs to the universal ribosomal protein uS2 family.

The protein is Small ribosomal subunit protein uS2 of Syntrophotalea carbinolica (strain DSM 2380 / NBRC 103641 / GraBd1) (Pelobacter carbinolicus).